We begin with the raw amino-acid sequence, 122 residues long: LYR motif-containing protein 1 (122 aa).

This sequence belongs to the complex I LYR family.

In terms of biological role, may promote cell proliferation and inhibition of apoptosis of preadipocytes. The sequence is that of LYR motif-containing protein 1 (Lyrm1) from Rattus norvegicus (Rat).